Consider the following 141-residue polypeptide: Oleosin L (141 aa).

The next 3 helical transmembrane spans lie at 23–43 (VLFFVVMGGGVLASLSALALA), 46–66 (VVLMLILTPVFLLLSPVILPV), and 74–94 (AAAFMAAVTIGIAGAAALIWV). The Proline-knot motif lies at 54–65 (PVFLLLSPVILP).

Belongs to the oleosin family. As to expression, expressed in megagametophytes (at protein level).

The protein resides in the lipid droplet. It is found in the membrane. This Pinus massoniana (Chinese red pine) protein is Oleosin L.